A 130-amino-acid polypeptide reads, in one-letter code: MKVLNNLLYTGDHEWIRVEDNKAYIGISDCAQRMLSDIVFVELPEVDDEIAKGETFATIESVKAASDSYMPVSGTIVEINEELEDNPAALNEDPYGSWIIAVEMSDKSELEELIKPEVYEKICEELDKEA.

The 82-residue stretch at Lys-22–Glu-103 folds into the Lipoyl-binding domain. Lys-63 is subject to N6-lipoyllysine.

The protein belongs to the GcvH family. In terms of assembly, the glycine cleavage system is composed of four proteins: P, T, L and H. (R)-lipoate serves as cofactor.

The glycine cleavage system catalyzes the degradation of glycine. The H protein shuttles the methylamine group of glycine from the P protein to the T protein. This chain is Glycine cleavage system H protein, found in Clostridium botulinum (strain Kyoto / Type A2).